A 36-amino-acid chain; its full sequence is Toxin Bcg III 29.21 (36 aa).

Cys-6 and Cys-31 are joined by a disulfide.

It localises to the secreted. Its subcellular location is the nematocyst. This chain is Toxin Bcg III 29.21, found in Bunodosoma cangicum (Sea anemone).